A 230-amino-acid chain; its full sequence is MSDNANREGRRAIVLLSGGLDSMVSGGIAREQGFALAALTIDYNQRHRVELEAAKRVAAALGVDRHVTLPLNLRAFGGSSLTDDIDVPKDGVMPGIPSTYVPARNTIFLSLALGFAEATGARDIFLGVNALDYSGYPDCRPEFIAAFQHLADLATKMGVEGQGFTIHAPLQHMTKADIAQEAARLGLDAGMSWSCYDPTPDGKHCGLCDSCRLRSKGFADAGLADPTVYA.

ATP is bound at residue 16 to 26 (LSGGLDSMVSG). Residues C195, C205, C208, and C211 each coordinate Zn(2+).

Belongs to the QueC family. Zn(2+) is required as a cofactor.

The enzyme catalyses 7-carboxy-7-deazaguanine + NH4(+) + ATP = 7-cyano-7-deazaguanine + ADP + phosphate + H2O + H(+). It participates in purine metabolism; 7-cyano-7-deazaguanine biosynthesis. Its function is as follows. Catalyzes the ATP-dependent conversion of 7-carboxy-7-deazaguanine (CDG) to 7-cyano-7-deazaguanine (preQ(0)). The chain is 7-cyano-7-deazaguanine synthase from Rhizorhabdus wittichii (strain DSM 6014 / CCUG 31198 / JCM 15750 / NBRC 105917 / EY 4224 / RW1) (Sphingomonas wittichii).